Reading from the N-terminus, the 173-residue chain is NEDD4-binding protein 2-like 1 (173 aa).

Positions methionine 1–proline 35 are disordered. Positions glutamine 18–glycine 32 are enriched in pro residues.

Interacts with dynactin subunit proteins, including DCTN4, DCTN5 and DCTN5.

Its function is as follows. Might play a role in adipocyte differentiation and triglyceride accumulation. The protein is NEDD4-binding protein 2-like 1 (N4BP2L1) of Bos taurus (Bovine).